The sequence spans 725 residues: Sodium/hydrogen exchanger 7 (725 aa).

The disordered stretch occupies residues 1–20 (MEPGDAARPGSGRATGAPPP). Topologically, residues 1 to 21 (MEPGDAARPGSGRATGAPPPR) are cytoplasmic. A helical membrane pass occupies residues 22-42 (LLLLPLLLGWGLRVAAAASAS). Residues 43 to 70 (SSGAAAEDSSAMEELATEKEAEESHRQD) are Lumenal-facing. The chain crosses the membrane as a helical span at residues 71–91 (SVSLLTFILLLTLTILTIWLF). Over 92 to 95 (KHRR) the chain is Cytoplasmic. Residues 96 to 116 (VRFLHETGLAMIYGLIVGVIL) form a helical membrane-spanning segment. The Lumenal segment spans residues 117–175 (RYGTPATSGRDKSLSCTQEDRAFSTLLVNVSGKFFEYTLKGEISPGKINSVEQNDMLRK). An N-linked (GlcNAc...) asparagine glycan is attached at asparagine 145. A helical membrane pass occupies residues 176–196 (VTFDPEVFFNILLPPIIFHAG). Over 197 to 210 (YSLKKRHFFRNLGS) the chain is Cytoplasmic. Residues 211 to 231 (ILAYAFLGTAVSCFIIGNLMY) traverse the membrane as a helical segment. Residues 232-251 (GVVKLMKIMGQLSDKFYYTD) are Lumenal-facing. A helical transmembrane segment spans residues 252 to 272 (CLFFGAIISATDPVTVLAIFN). Topologically, residues 273–277 (ELHAD) are cytoplasmic. A helical membrane pass occupies residues 278–298 (VDLYALLFGESVLNDAVAIVL). Over 299-322 (SSSIVAYQPAGLNTHAFDAAAFFK) the chain is Lumenal. Residues 323–343 (SVGIFLGIFSGSFTMGAVTGV) traverse the membrane as a helical segment. The Cytoplasmic portion of the chain corresponds to 344-349 (NANVTK). A run of 2 helical transmembrane segments spans residues 350–370 (FTKLHCFPLLETALFFLMSWS) and 371–391 (TFLLAEACGFTGVVAVLFCGI). Residues 392 to 414 (TQAHYTYNNLSVESRSRTKQLFE) lie on the Cytoplasmic side of the membrane. Residues 415–435 (VLHFLAENFIFSYMGLALFTF) traverse the membrane as a helical segment. Residues 436–442 (QKHVFSP) lie on the Lumenal side of the membrane. Residues 443–463 (IFIIGAFVAIFLGRAAHIYPL) form a helical membrane-spanning segment. Residues 464–474 (SFFLNLGRRHK) lie on the Cytoplasmic side of the membrane. The chain crosses the membrane as a helical span at residues 475 to 497 (IGWNFQHMMMFSGLRGAMAFALA). The Lumenal segment spans residues 498–513 (IRDTASYARQMMFTTT). The helical transmembrane segment at 514 to 534 (LLIVFFTVWIIGGGTTPMLSW) threads the bilayer. 2 required for trans-Golgi network localization regions span residues 533–559 (SWLNIRVGVEEPSEEDQNEHHWQYFRV) and 563–568 (PDQDPP). At 535–725 (LNIRVGVEEP…RLVFPLEDNA (191 aa)) the chain is on the cytoplasmic side. At serine 545 the chain carries Phosphoserine. 2 disordered regions span residues 567 to 590 (PPPNNDSFQVLQGDGPDSARGNRT) and 669 to 714 (TVTA…SSRG). Low complexity predominate over residues 675–684 (SSSSHTASTS). A compositionally biased stretch (basic and acidic residues) spans 687 to 704 (GSRRTKSSSEEVLERDLG).

Belongs to the monovalent cation:proton antiporter 1 (CPA1) transporter (TC 2.A.36) family. As to quaternary structure, interacts with SCAMP1, SCAMP2 and SCAMP5; may participate in its shuttling from trans-Golgi network to recycling endosomes. In terms of processing, N-glycosylated. As to expression, ubiquitously expressed.

It is found in the golgi apparatus. It localises to the trans-Golgi network membrane. The protein localises to the recycling endosome membrane. The protein resides in the cell membrane. The enzyme catalyses Na(+)(in) + H(+)(out) = Na(+)(out) + H(+)(in). It catalyses the reaction K(+)(in) + H(+)(out) = K(+)(out) + H(+)(in). With respect to regulation, inhibited by benzamil and quinine but not by amiloride. In terms of biological role, golgi Na(+), K(+)/(H+) antiporter. Mediates the electoneutral influx of Na(+) or K(+) in exchange for H(+). May contribute to the regulation of Golgi apparatus volume and pH. The sequence is that of Sodium/hydrogen exchanger 7 (SLC9A7) from Homo sapiens (Human).